Reading from the N-terminus, the 425-residue chain is Serine--tRNA ligase (425 aa).

Threonine 233 to glutamate 235 provides a ligand contact to L-serine. An ATP-binding site is contributed by arginine 264 to glutamate 266. Glutamate 287 contacts L-serine. Glutamate 351 to serine 354 is a binding site for ATP. Serine 385 contacts L-serine.

This sequence belongs to the class-II aminoacyl-tRNA synthetase family. Type-1 seryl-tRNA synthetase subfamily. Homodimer. The tRNA molecule binds across the dimer.

It localises to the cytoplasm. The enzyme catalyses tRNA(Ser) + L-serine + ATP = L-seryl-tRNA(Ser) + AMP + diphosphate + H(+). It catalyses the reaction tRNA(Sec) + L-serine + ATP = L-seryl-tRNA(Sec) + AMP + diphosphate + H(+). Its pathway is aminoacyl-tRNA biosynthesis; selenocysteinyl-tRNA(Sec) biosynthesis; L-seryl-tRNA(Sec) from L-serine and tRNA(Sec): step 1/1. Functionally, catalyzes the attachment of serine to tRNA(Ser). Is also able to aminoacylate tRNA(Sec) with serine, to form the misacylated tRNA L-seryl-tRNA(Sec), which will be further converted into selenocysteinyl-tRNA(Sec). This chain is Serine--tRNA ligase, found in Prochlorococcus marinus (strain SARG / CCMP1375 / SS120).